Here is a 399-residue protein sequence, read N- to C-terminus: Argininosuccinate synthase (399 aa).

ATP-binding positions include 8-16 (AYSGGLDTS) and alanine 35. Tyrosine 87 serves as a coordination point for L-citrulline. Residue glycine 117 coordinates ATP. Positions 119, 123, and 124 each coordinate L-aspartate. Residue asparagine 123 coordinates L-citrulline. Positions 127, 176, 185, 261, and 273 each coordinate L-citrulline.

This sequence belongs to the argininosuccinate synthase family. Type 1 subfamily. In terms of assembly, homotetramer.

It localises to the cytoplasm. It carries out the reaction L-citrulline + L-aspartate + ATP = 2-(N(omega)-L-arginino)succinate + AMP + diphosphate + H(+). The protein operates within amino-acid biosynthesis; L-arginine biosynthesis; L-arginine from L-ornithine and carbamoyl phosphate: step 2/3. The sequence is that of Argininosuccinate synthase from Buchnera aphidicola subsp. Cinara cedri (strain Cc).